A 130-amino-acid chain; its full sequence is Putative pre-16S rRNA nuclease (130 aa).

The protein belongs to the YqgF nuclease family.

It localises to the cytoplasm. Its function is as follows. Could be a nuclease involved in processing of the 5'-end of pre-16S rRNA. This Buchnera aphidicola subsp. Cinara cedri (strain Cc) protein is Putative pre-16S rRNA nuclease.